The chain runs to 199 residues: Protein-methionine-sulfoxide reductase heme-binding subunit MsrQ (199 aa).

The next 5 membrane-spanning stretches (helical) occupy residues 13–33 (VLLH…VDQG), 79–99 (LLGL…ALLE), 120–140 (LGVI…QIMM), 147–167 (WQKL…HYLW), and 169–189 (VKTL…LLLF).

The protein belongs to the MsrQ family. Heterodimer of a catalytic subunit (MsrP) and a heme-binding subunit (MsrQ). The cofactor is FMN. It depends on heme b as a cofactor.

The protein resides in the cell inner membrane. In terms of biological role, part of the MsrPQ system that repairs oxidized periplasmic proteins containing methionine sulfoxide residues (Met-O), using respiratory chain electrons. Thus protects these proteins from oxidative-stress damage caused by reactive species of oxygen and chlorine generated by the host defense mechanisms. MsrPQ is essential for the maintenance of envelope integrity under bleach stress, rescuing a wide series of structurally unrelated periplasmic proteins from methionine oxidation. MsrQ provides electrons for reduction to the reductase catalytic subunit MsrP, using the quinone pool of the respiratory chain. This chain is Protein-methionine-sulfoxide reductase heme-binding subunit MsrQ, found in Pectobacterium carotovorum subsp. carotovorum (strain PC1).